We begin with the raw amino-acid sequence, 962 residues long: Cohesin subunit psc3 (962 aa).

The segment at 1–72 is disordered; that stretch reads MSESVTTGSD…GVNVKRSRRN (72 aa). The segment covering 21-30 has biased composition (polar residues); sequence VMLSQSFDPM. Basic residues predominate over residues 51–71; it reads SSKKRHPRPNSKGVNVKRSRR. Residues 236 to 275 adopt a coiled-coil conformation; sequence LCEKSKELLNEHAIATKQLEKEEKRSRVNRNRINELNNSL. An SCD domain is found at 297 to 382; it reads FVHRYRDVEP…SRFKERILEM (86 aa).

The protein belongs to the SCC3 family. As to quaternary structure, cohesin complexes are composed of the psm1/smc1 and psm3/smc3 heterodimer attached via their hinge domain, rad21/scc1 which link them, and psc3/scc3, which interacts with rad21. Interacts with swi6. The interaction with swi6 may contribute to recruit cohesin complex to heterochromatin.

It localises to the nucleus. The protein localises to the chromosome. Its subcellular location is the centromere. Functionally, component of cohesin complex, a complex required for the cohesion of sister chromatids after DNA replication. The cohesin complex apparently forms a large proteinaceous ring within which sister chromatids can be trapped. At anaphase, the rad21 subunit of the cohesin complex is cleaved and dissociates from chromatin, allowing sister chromatids to segregate. The cohesin complex may also play a role in spindle pole assembly during mitosis. This chain is Cohesin subunit psc3 (psc3), found in Schizosaccharomyces pombe (strain 972 / ATCC 24843) (Fission yeast).